Reading from the N-terminus, the 611-residue chain is Protein spaetzle 3 (611 aa).

The N-terminal stretch at 1–14 (MALTNFSLPFGALG) is a signal peptide. N5 carries N-linked (GlcNAc...) asparagine glycosylation. The interval 57 to 322 (EYFKNNPYAP…NDKSNNNQMP (266 aa)) is disordered. 3 stretches are compositionally biased toward low complexity: residues 104-120 (QQVQ…QHQQ), 127-153 (SVSF…LTQT), and 169-185 (PGQQ…QQKQ). Over residues 191–210 (GSASATFTKNSGSFSITSFG) the composition is skewed to polar residues. Pro residues predominate over residues 218–239 (PPQPQQPPPSQQQQPPPAPPPQ). The segment covering 288 to 306 (YDVEEGEEDEEEDGEEEGQ) has biased composition (acidic residues). 2 N-linked (GlcNAc...) asparagine glycosylation sites follow: N335 and N351. Residues 477-518 (KKRQAAAGGSRNRGGSAGGSGNGNTNANRQPGNKNGSSGTGR) are disordered. Positions 487–498 (RNRGGSAGGSGN) are enriched in gly residues. N-linked (GlcNAc...) asparagine glycosylation occurs at N511. One can recognise a Spaetzle domain in the interval 521-609 (ACESKIEIVT…LFPSCCVCRC (89 aa)). Intrachain disulfides connect C522–C573, C559–C605, and C567–C607.

In terms of assembly, homodimer; disulfide-linked.

Its function is as follows. Neurotrophin which may function as a ligand to the Toll-related receptor Tollo. Involved in a Tollo and JNK signaling pathway that positively regulates neuromuscular junction (NMJ) growth in presynaptic motorneurons. May function by activating Tollo to promote the phosphorylation of JNK. This Drosophila melanogaster (Fruit fly) protein is Protein spaetzle 3.